We begin with the raw amino-acid sequence, 91 residues long: Small ribosomal subunit protein uS15 (91 aa).

Belongs to the universal ribosomal protein uS15 family. In terms of assembly, part of the 30S ribosomal subunit. Forms a bridge to the 50S subunit in the 70S ribosome, contacting the 23S rRNA.

In terms of biological role, one of the primary rRNA binding proteins, it binds directly to 16S rRNA where it helps nucleate assembly of the platform of the 30S subunit by binding and bridging several RNA helices of the 16S rRNA. Its function is as follows. Forms an intersubunit bridge (bridge B4) with the 23S rRNA of the 50S subunit in the ribosome. This chain is Small ribosomal subunit protein uS15, found in Rickettsia akari (strain Hartford).